A 519-amino-acid chain; its full sequence is MPFNGEKQCVSEDQPSDSDSSRFSESMASLSDYECSRQSFTSDSSSKSSSPASTSPPRVVTFDEVMAAARNLSNMTLAHEIAVNENFQLKQDALPESSLAGRVRHIVHQAFWDVLESELNAEPPEYEHAIKLFEEIREILLSFLTPGGNRLRNQICEVLDTDLIRQQAEHSAVDIQGLANYVISTMGKLCAPVRDDDIRELKATSNIVEVLRQIFHVLDLMKMDMVNFTIRSLRPHLQRQLVDYERTKFQEILEETPSALNQTTEWIKESVHEELLSLSEATLTPGAENNSKPSLSPTLVLNNSYLKLLQWDYQKKELPETLMTDGARLQELTEKLNQLKMIACLALITNNMVGALTEGLPELAVRLKRISAVLLEGMNKETFNLKEVLNSIGIQICVEVNKTLMERGLPTLNAEVQDNLVGQFSSIEEEDNPIWSLIDKRIQLYMKSLLCLPSPPRCMPPVPGGLAVVQQELESLGLQYANIVNLNKQVYGPFYANILRKLLFGEEATGKAEASSSTN.

The tract at residues 1–57 is disordered; sequence MPFNGEKQCVSEDQPSDSDSSRFSESMASLSDYECSRQSFTSDSSSKSSSPASTSPP. Serine 16 carries the phosphoserine modification. Low complexity-rich tracts occupy residues 17–29 and 36–55; these read DSDS…SMAS and SRQS…ASTS.

The protein belongs to the TCP11 family. As to quaternary structure, interacts with FMNL2; this interaction promotes muscle-derived satellite cell (MDSC) migration and differentiation.

The protein resides in the cytoplasm. It is found in the cytoskeleton. Its function is as follows. Promotes the migration of muscle-derived satellite cells (MDSCs) during differentiation throught interaction with FMNL2 and therefore may participate in microfilament assembly. In Bos taurus (Bovine), this protein is T-complex protein 11-like protein 2.